The primary structure comprises 809 residues: LPS-assembly protein LptD (809 aa).

An N-terminal signal peptide occupies residues 1–22 (MRRALRLLPLPLSIAICLPAMA).

Belongs to the LptD family. Component of the lipopolysaccharide transport and assembly complex. Interacts with LptE and LptA.

Its subcellular location is the cell outer membrane. Its function is as follows. Together with LptE, is involved in the assembly of lipopolysaccharide (LPS) at the surface of the outer membrane. In Xanthomonas campestris pv. campestris (strain 8004), this protein is LPS-assembly protein LptD.